The primary structure comprises 493 residues: Transcript termination protein A18 (493 aa).

In terms of domain architecture, Helicase ATP-binding spans 100–256; that stretch reads MIESKRPLYI…NSIINIAKLS (157 aa). 113–120 serves as a coordination point for ATP; it reads LACGFGKT. Positions 206–209 match the DESH box motif; the sequence is DESH.

The protein belongs to the helicase family. Poxviruses subfamily. As to quaternary structure, interacts with G2. Might be part of a transcription complex composed at least of G2, A18, and H5.

Its subcellular location is the virion. Functionally, DNA helicase which seems to act as a postreplicative transcription termination factor. Involved in ATP-dependent release of nascent RNA. Forms a stable complex with single-stranded DNA, and to a lesser extent RNA. The sequence is that of Transcript termination protein A18 from Homo sapiens (Human).